Consider the following 462-residue polypeptide: L-seryl-tRNA(Sec) selenium transferase (462 aa).

Lys-292 carries the N6-(pyridoxal phosphate)lysine modification.

It belongs to the SelA family. Requires pyridoxal 5'-phosphate as cofactor.

The protein resides in the cytoplasm. The enzyme catalyses L-seryl-tRNA(Sec) + selenophosphate + H(+) = L-selenocysteinyl-tRNA(Sec) + phosphate. Its pathway is aminoacyl-tRNA biosynthesis; selenocysteinyl-tRNA(Sec) biosynthesis; selenocysteinyl-tRNA(Sec) from L-seryl-tRNA(Sec) (bacterial route): step 1/1. Functionally, converts seryl-tRNA(Sec) to selenocysteinyl-tRNA(Sec) required for selenoprotein biosynthesis. The sequence is that of L-seryl-tRNA(Sec) selenium transferase from Geobacter sulfurreducens (strain ATCC 51573 / DSM 12127 / PCA).